Reading from the N-terminus, the 86-residue chain is MANSKSAKKRATQAERRRQHNASRRSMMRTYMKKTIAAIEAGDKEAATAALAIATPLLDRMATKGLIHKNKAARHKARFTAAIKAL.

Positions 1-27 are enriched in basic residues; sequence MANSKSAKKRATQAERRRQHNASRRSM. The segment at 1–28 is disordered; the sequence is MANSKSAKKRATQAERRRQHNASRRSMM.

Belongs to the bacterial ribosomal protein bS20 family.

Its function is as follows. Binds directly to 16S ribosomal RNA. The polypeptide is Small ribosomal subunit protein bS20 (Aliivibrio salmonicida (strain LFI1238) (Vibrio salmonicida (strain LFI1238))).